A 472-amino-acid chain; its full sequence is uncharacterized protein (472 aa).

Low complexity-rich tracts occupy residues 1-21 (MAFSSSSLRRSLKLGRGSRPG) and 63-74 (ASSLPAPASSSP). Residues 1–74 (MAFSSSSLRR…SLPAPASSSP (74 aa)) form a disordered region.

This is an uncharacterized protein from Equus caballus (Horse).